Consider the following 182-residue polypeptide: Adenine phosphoribosyltransferase (182 aa).

It belongs to the purine/pyrimidine phosphoribosyltransferase family. As to quaternary structure, homodimer.

The protein resides in the cytoplasm. It catalyses the reaction AMP + diphosphate = 5-phospho-alpha-D-ribose 1-diphosphate + adenine. The protein operates within purine metabolism; AMP biosynthesis via salvage pathway; AMP from adenine: step 1/1. Functionally, catalyzes a salvage reaction resulting in the formation of AMP, that is energically less costly than de novo synthesis. The sequence is that of Adenine phosphoribosyltransferase from Pseudomonas putida (strain GB-1).